Reading from the N-terminus, the 395-residue chain is 1-deoxy-D-xylulose 5-phosphate reductoisomerase (395 aa).

NADPH is bound by residues T10, G11, S12, I13, R37, Q38, and N124. 1-deoxy-D-xylulose 5-phosphate is bound at residue K125. E126 is a binding site for NADPH. D150 lines the Mn(2+) pocket. S151, E152, S179, and H202 together coordinate 1-deoxy-D-xylulose 5-phosphate. E152 is a Mn(2+) binding site. Residue G208 participates in NADPH binding. 1-deoxy-D-xylulose 5-phosphate is bound by residues S215, N220, K221, and E224. A Mn(2+)-binding site is contributed by E224.

This sequence belongs to the DXR family. The cofactor is Mg(2+). Mn(2+) serves as cofactor.

The catalysed reaction is 2-C-methyl-D-erythritol 4-phosphate + NADP(+) = 1-deoxy-D-xylulose 5-phosphate + NADPH + H(+). It functions in the pathway isoprenoid biosynthesis; isopentenyl diphosphate biosynthesis via DXP pathway; isopentenyl diphosphate from 1-deoxy-D-xylulose 5-phosphate: step 1/6. Its function is as follows. Catalyzes the NADPH-dependent rearrangement and reduction of 1-deoxy-D-xylulose-5-phosphate (DXP) to 2-C-methyl-D-erythritol 4-phosphate (MEP). The chain is 1-deoxy-D-xylulose 5-phosphate reductoisomerase from Cupriavidus pinatubonensis (strain JMP 134 / LMG 1197) (Cupriavidus necator (strain JMP 134)).